Here is a 508-residue protein sequence, read N- to C-terminus: Steroid 17-alpha-hydroxylase/17,20 lyase (508 aa).

Cys-442 provides a ligand contact to heme.

It belongs to the cytochrome P450 family. The cofactor is heme.

The protein localises to the endoplasmic reticulum membrane. It localises to the microsome membrane. It carries out the reaction a C21-steroid + reduced [NADPH--hemoprotein reductase] + O2 = a 17alpha-hydroxy-C21-steroid + oxidized [NADPH--hemoprotein reductase] + H2O + H(+). The enzyme catalyses progesterone + reduced [NADPH--hemoprotein reductase] + O2 = 17alpha-hydroxyprogesterone + oxidized [NADPH--hemoprotein reductase] + H2O + H(+). The catalysed reaction is pregnenolone + reduced [NADPH--hemoprotein reductase] + O2 = 17alpha-hydroxypregnenolone + oxidized [NADPH--hemoprotein reductase] + H2O + H(+). It catalyses the reaction 17alpha-hydroxyprogesterone + reduced [NADPH--hemoprotein reductase] + O2 = androst-4-ene-3,17-dione + acetate + oxidized [NADPH--hemoprotein reductase] + H2O + 2 H(+). It carries out the reaction 17alpha-hydroxyprogesterone + reduced [NADPH--hemoprotein reductase] + O2 = 16alpha,17alpha-dihydroxyprogesterone + oxidized [NADPH--hemoprotein reductase] + H2O + H(+). The enzyme catalyses 16alpha,17alpha-dihydroxyprogesterone + reduced [NADPH--hemoprotein reductase] + O2 = 6beta,16alpha,17alpha-trihydroxyprogesterone + oxidized [NADPH--hemoprotein reductase] + H2O + H(+). The catalysed reaction is 17alpha-hydroxypregnenolone + reduced [NADPH--hemoprotein reductase] + O2 = 3beta-hydroxyandrost-5-en-17-one + acetate + oxidized [NADPH--hemoprotein reductase] + H2O + 2 H(+). It catalyses the reaction 16alpha,17alpha-dihydroxypregnenolone + reduced [NADPH--hemoprotein reductase] + O2 = 3beta,16alpha-dihydroxy-androst-5-en-17-one + acetate + oxidized [NADPH--hemoprotein reductase] + H2O + 2 H(+). It carries out the reaction 3beta-hydroxyandrost-5-en-17-one + reduced [NADPH--hemoprotein reductase] + O2 = 3beta,16alpha-dihydroxy-androst-5-en-17-one + oxidized [NADPH--hemoprotein reductase] + H2O + H(+). The enzyme catalyses androst-4-ene-3,17-dione + reduced [NADPH--hemoprotein reductase] + O2 = 16alpha-hydroxyandrost-4-ene-3,17-dione + oxidized [NADPH--hemoprotein reductase] + H2O + H(+). It participates in steroid hormone biosynthesis. The protein operates within steroid biosynthesis; glucocorticoid biosynthesis. With respect to regulation, regulated predominantly by intracellular cAMP levels. The 17,20-lyase activity is stimulated by cytochrome b5, which acts as an allosteric effector increasing the Vmax of the lyase activity. Its function is as follows. A cytochrome P450 monooxygenase involved in corticoid and androgen biosynthesis. Catalyzes 17-alpha hydroxylation of C21 steroids, which is common for both pathways. A second oxidative step, required only for androgen synthesis, involves an acyl-carbon cleavage. The 17-alpha hydroxy intermediates, as part of adrenal glucocorticoids biosynthesis pathway, are precursors of cortisol. Hydroxylates steroid hormones, pregnenolone and progesterone to form 17-alpha hydroxy metabolites, followed by the cleavage of the C17-C20 bond to form C19 steroids, dehydroepiandrosterone (DHEA) and androstenedione. Has 16-alpha hydroxylase activity. Catalyzes 16-alpha hydroxylation of 17-alpha hydroxy pregnenolone, followed by the cleavage of the C17-C20 bond to form 16-alpha-hydroxy DHEA. Also 16-alpha hydroxylates androgens, relevant for estriol synthesis. Mechanistically, uses molecular oxygen inserting one oxygen atom into a substrate, and reducing the second into a water molecule, with two electrons provided by NADPH via cytochrome P450 reductase (CPR; NADPH-ferrihemoprotein reductase). In Cavia porcellus (Guinea pig), this protein is Steroid 17-alpha-hydroxylase/17,20 lyase (CYP17A1).